A 502-amino-acid chain; its full sequence is Mannitol 2-dehydrogenase (502 aa).

Residue 37–48 coordinates NAD(+); sequence IVHIGVGGFHRA.

It belongs to the mannitol dehydrogenase family. In terms of assembly, monomer.

The enzyme catalyses D-mannitol + NAD(+) = D-fructose + NADH + H(+). Catalyzes the NAD(H)-dependent interconversion of D-fructose and D-mannitol in the mannitol metabolic pathway. This is Mannitol 2-dehydrogenase from Aspergillus fumigatus (strain CBS 144.89 / FGSC A1163 / CEA10) (Neosartorya fumigata).